Reading from the N-terminus, the 791-residue chain is Endonuclease MutS2 (791 aa).

337-344 (GPNTGGKT) lines the ATP pocket. Residues 689 to 715 (AAQASQKKPEKSVRSSRGLRSSRASSE) form a disordered region. The segment covering 703 to 713 (SSRGLRSSRAS) has biased composition (low complexity). In terms of domain architecture, Smr spans 716-791 (LDLRGQRYEE…GTGATIVNLQ (76 aa)).

Belongs to the DNA mismatch repair MutS family. MutS2 subfamily. Homodimer. Binds to stalled ribosomes, contacting rRNA.

Endonuclease that is involved in the suppression of homologous recombination and thus may have a key role in the control of bacterial genetic diversity. Its function is as follows. Acts as a ribosome collision sensor, splitting the ribosome into its 2 subunits. Detects stalled/collided 70S ribosomes which it binds and splits by an ATP-hydrolysis driven conformational change. Acts upstream of the ribosome quality control system (RQC), a ribosome-associated complex that mediates the extraction of incompletely synthesized nascent chains from stalled ribosomes and their subsequent degradation. Probably generates substrates for RQC. This is Endonuclease MutS2 from Lactobacillus gasseri (strain ATCC 33323 / DSM 20243 / BCRC 14619 / CIP 102991 / JCM 1131 / KCTC 3163 / NCIMB 11718 / NCTC 13722 / AM63).